The chain runs to 299 residues: Cancer/testis antigen family 47 member B1 (299 aa).

The span at 1 to 10 (MSATGDRHPT) shows a compositional bias: basic and acidic residues. Disordered regions lie at residues 1–102 (MSAT…EGNE) and 215–299 (AREP…SKGT). Composition is skewed to low complexity over residues 20-31 (QEGAQAEAAGAG) and 46-60 (VPAA…PVEG). The segment covering 81 to 101 (AEEDSDIGPATEEEEEEEEGN) has biased composition (acidic residues). Over residues 215–238 (AREPAEEAADEKPPEEAAEEKLTE) the composition is skewed to basic and acidic residues. 2 stretches are compositionally biased toward acidic residues: residues 239 to 251 (EATE…EPTS) and 268 to 281 (WDEE…EEEK). Residues 270-298 (EEAQDAAGEEEKEQEKEKDVENKVKNSKG) adopt a coiled-coil conformation. The segment covering 282–293 (EQEKEKDVENKV) has biased composition (basic and acidic residues).

The protein belongs to the CT47 family.

The protein is Cancer/testis antigen family 47 member B1 of Homo sapiens (Human).